Consider the following 47-residue polypeptide: Large ribosomal subunit protein bL34 (47 aa).

This sequence belongs to the bacterial ribosomal protein bL34 family.

In Corynebacterium jeikeium (strain K411), this protein is Large ribosomal subunit protein bL34.